The chain runs to 185 residues: Elongation factor P (185 aa).

This sequence belongs to the elongation factor P family.

It localises to the cytoplasm. Its pathway is protein biosynthesis; polypeptide chain elongation. In terms of biological role, involved in peptide bond synthesis. Stimulates efficient translation and peptide-bond synthesis on native or reconstituted 70S ribosomes in vitro. Probably functions indirectly by altering the affinity of the ribosome for aminoacyl-tRNA, thus increasing their reactivity as acceptors for peptidyl transferase. This chain is Elongation factor P, found in Streptococcus pyogenes serotype M49 (strain NZ131).